A 406-amino-acid chain; its full sequence is Glutamyl-tRNA(Gln) amidotransferase subunit D (406 aa).

Residues 68–390 (KSISILATGG…EEFINVFNRN (323 aa)) enclose the Asparaginase/glutaminase domain. Active-site residues include Thr-78, Thr-152, Asp-153, and Lys-230.

The protein belongs to the asparaginase 1 family. GatD subfamily. Heterodimer of GatD and GatE.

The enzyme catalyses L-glutamyl-tRNA(Gln) + L-glutamine + ATP + H2O = L-glutaminyl-tRNA(Gln) + L-glutamate + ADP + phosphate + H(+). Allows the formation of correctly charged Gln-tRNA(Gln) through the transamidation of misacylated Glu-tRNA(Gln) in organisms which lack glutaminyl-tRNA synthetase. The reaction takes place in the presence of glutamine and ATP through an activated gamma-phospho-Glu-tRNA(Gln). The GatDE system is specific for glutamate and does not act on aspartate. This chain is Glutamyl-tRNA(Gln) amidotransferase subunit D, found in Thermoplasma volcanium (strain ATCC 51530 / DSM 4299 / JCM 9571 / NBRC 15438 / GSS1).